We begin with the raw amino-acid sequence, 167 residues long: Phosphopantetheine adenylyltransferase (167 aa).

Ser10 is a substrate binding site. ATP-binding positions include 10-11 (SF) and His18. Residues Lys42, Ala79, and Arg93 each coordinate substrate. ATP contacts are provided by residues 94 to 96 (GLR), Glu104, and 129 to 135 (VGHITAT).

It belongs to the bacterial CoaD family. In terms of assembly, homohexamer. Mg(2+) is required as a cofactor.

It localises to the cytoplasm. It carries out the reaction (R)-4'-phosphopantetheine + ATP + H(+) = 3'-dephospho-CoA + diphosphate. It participates in cofactor biosynthesis; coenzyme A biosynthesis; CoA from (R)-pantothenate: step 4/5. Its function is as follows. Reversibly transfers an adenylyl group from ATP to 4'-phosphopantetheine, yielding dephospho-CoA (dPCoA) and pyrophosphate. The protein is Phosphopantetheine adenylyltransferase of Methylocella silvestris (strain DSM 15510 / CIP 108128 / LMG 27833 / NCIMB 13906 / BL2).